A 658-amino-acid chain; its full sequence is UvrABC system protein B (658 aa).

The region spanning 25–414 (KSLKNNNHYQ…LSKKNVAEQI (390 aa)) is the Helicase ATP-binding domain. 38-45 (GVTGSGKT) is a binding site for ATP. Residues 91–114 (HFDYYQPESYIPRRDLFIEKDSSI) carry the Beta-hairpin motif. One can recognise a Helicase C-terminal domain in the interval 433–607 (QVQDLFDEIK…ELKLRDDEIR (175 aa)). Positions 623 to 658 (EKIIKELDKKMRECTKNLDFEEAMRLRDEIAQLRTL) constitute a UVR domain.

The protein belongs to the UvrB family. As to quaternary structure, forms a heterotetramer with UvrA during the search for lesions. Interacts with UvrC in an incision complex.

Its subcellular location is the cytoplasm. In terms of biological role, the UvrABC repair system catalyzes the recognition and processing of DNA lesions. A damage recognition complex composed of 2 UvrA and 2 UvrB subunits scans DNA for abnormalities. Upon binding of the UvrA(2)B(2) complex to a putative damaged site, the DNA wraps around one UvrB monomer. DNA wrap is dependent on ATP binding by UvrB and probably causes local melting of the DNA helix, facilitating insertion of UvrB beta-hairpin between the DNA strands. Then UvrB probes one DNA strand for the presence of a lesion. If a lesion is found the UvrA subunits dissociate and the UvrB-DNA preincision complex is formed. This complex is subsequently bound by UvrC and the second UvrB is released. If no lesion is found, the DNA wraps around the other UvrB subunit that will check the other stand for damage. The sequence is that of UvrABC system protein B from Helicobacter pylori (strain ATCC 700392 / 26695) (Campylobacter pylori).